A 1096-amino-acid polypeptide reads, in one-letter code: Protein EMBRYONIC FLOWER 1 (1096 aa).

8 disordered regions span residues 155-189, 274-296, 315-348, 366-420, 563-612, 629-651, 1007-1032, and 1070-1096; these read KARG…EKLN, KTSG…VRGR, GATS…KGKQ, ETSQ…KKPV, LSRV…DIPM, DKEE…KNAL, DKEK…KNSS, and FKKK…TQNA. Short sequence motifs (nuclear localization signal) lie at residues 170-177 and 281-288; these read SRKLVSPE and IRKEESAL. The segment covering 281–294 has biased composition (basic and acidic residues); that stretch reads IRKEESALKKESVR. The span at 315-337 shows a compositional bias: polar residues; that stretch reads GATSENASKSCDSDQGNSESTDS. The tract at residues 337 to 617 is DNA-binding; that stretch reads SGFDRTPFKG…DDIPMEIVEL (281 aa). Residues 371 to 381 show a composition bias toward basic and acidic residues; it reads GIKEHDADPSK. The span at 382–394 shows a compositional bias: polar residues; sequence RSTPAHSLFTGND. Basic and acidic residues predominate over residues 572-601; the sequence is SGADRKGKTVMVQEHHGAPRSQSHDRKETT. The segment at 866–1096 is DNA-binding; sequence LDPRLRSTTP…KPVCPPTQNA (231 aa). Residues 1018–1032 are compositionally biased toward polar residues; the sequence is SCNNNASAGPVKNSS. Positions 1071 to 1078 match the Nuclear localization signal 3 motif; it reads KKKPAVCK.

Interacts with MSI1. Expressed in mature embryo, root tips, cotyledons, leaves, stems, shoot apex, and flower clusters, with highest levels in flowers. The presence in the shoot apical meristem (SAM) is required to maintain vegetative development and prevent early flowering.

The protein resides in the nucleus. Its function is as follows. Transcription repressor that regulates phase transition during shoot, flower and seeds development. Controls leaves development, shoot architecture and flowering by delaying both the vegetative to reproductive transition and flower initiation. Participates in polycomb group (PcG) protein complex-mediated (including EMF2) silencing of the flower homeotic genes AGAMOUS (AG), PISTILLATA (PI), and APETALA3 (AP3), as well as of some regulatory genes such as ABSCISIC ACID INSENSITIVE3 (ABI3), LONG VEGETATIVE PHASE1 (LOV1), and FLOWERING LOCUS C (FLC) during vegetative development. Required for histone methylation or for maintaining a stable histone methylation (e.g. H3K27me3) pattern of repressed target genes (including genes involved in salt stress response and flower development); this repression is counteracted by ULT1. Can bind non specifically DNA (both double- and single-stranded) and RNA. This is Protein EMBRYONIC FLOWER 1 from Arabidopsis thaliana (Mouse-ear cress).